The chain runs to 277 residues: Phosphatidylglycerol--prolipoprotein diacylglyceryl transferase (277 aa).

7 helical membrane passes run 21–41, 60–80, 95–115, 124–144, 176–196, 203–223, and 239–259; these read LAVR…LWLA, LLFA…VLFY, VWTG…AMLW, FFTI…AGRL, SQLY…NWFI, GTVS…VEYV, and MGQI…LWAF. Residue arginine 143 participates in a 1,2-diacyl-sn-glycero-3-phospho-(1'-sn-glycerol) binding.

It belongs to the Lgt family.

It is found in the cell inner membrane. It carries out the reaction L-cysteinyl-[prolipoprotein] + a 1,2-diacyl-sn-glycero-3-phospho-(1'-sn-glycerol) = an S-1,2-diacyl-sn-glyceryl-L-cysteinyl-[prolipoprotein] + sn-glycerol 1-phosphate + H(+). It participates in protein modification; lipoprotein biosynthesis (diacylglyceryl transfer). Functionally, catalyzes the transfer of the diacylglyceryl group from phosphatidylglycerol to the sulfhydryl group of the N-terminal cysteine of a prolipoprotein, the first step in the formation of mature lipoproteins. This chain is Phosphatidylglycerol--prolipoprotein diacylglyceryl transferase, found in Aliivibrio fischeri (strain ATCC 700601 / ES114) (Vibrio fischeri).